The primary structure comprises 177 residues: Nuclear export protein (177 aa).

Short sequence motifs (nuclear export signal) lie at residues 91 to 100 (LWLPMKSLSL) and 117 to 127 (MKHQILTRLKL).

As to quaternary structure, binds M1 protein. May interact with human nucleoporins and exportin XPO1/CRM1.

The protein localises to the virion. The protein resides in the host nucleus. In terms of biological role, mediates the nuclear export of encapsidated genomic RNAs (ribonucleoproteins, RNPs). Acts as an adapter between viral RNPs complexes and the nuclear export machinery of the cell. Possesses no intrinsic RNA-binding activity, but includes a C-terminal M1-binding domain. This domain is believed to allow recognition of RNPs to which the M1 protein is bound. Because the M1 protein is not available in large quantities until the later stages of infection, such an indirect recognition mechanism probably ensures that genomic RNPs are not exported from the nucleus before sufficient quantities of viral mRNA and progeny genomic RNA have been synthesized. Furthermore, the RNPs enters the cytoplasm only when they have associated with the M1 protein that is necessary to guide them to the plasma membrane. May down-regulate viral RNA synthesis when overproduced. This Homo sapiens (Human) protein is Nuclear export protein (NS).